The chain runs to 155 residues: Endoribonuclease YbeY (155 aa).

Residues H114, H118, and H124 each contribute to the Zn(2+) site.

It belongs to the endoribonuclease YbeY family. Zn(2+) is required as a cofactor.

It localises to the cytoplasm. Its function is as follows. Single strand-specific metallo-endoribonuclease involved in late-stage 70S ribosome quality control and in maturation of the 3' terminus of the 16S rRNA. This chain is Endoribonuclease YbeY, found in Escherichia coli O1:K1 / APEC.